The chain runs to 432 residues: RNA binding protein fox-1 homolog 2 (432 aa).

Residues 1–21 (MAEGGQAQQQPPQLGPGAAAR) show a composition bias toward low complexity. The disordered stretch occupies residues 1–169 (MAEGGQAQQQ…STPKRLHVSN (169 aa)). Composition is skewed to polar residues over residues 60–69 (QGNQEPTTTP) and 101–121 (YAGQ…PHGE). Residues 122–159 (QSSNSPSNQNGSLTQTEGGAQTDGQQSQTQSSENSESK) are compositionally biased toward low complexity. Residues 163–239 (KRLHVSNIPF…RKIEVNNATA (77 aa)) enclose the RRM domain. Arg323 bears the Omega-N-methylarginine mark. 2 positions are modified to asymmetric dimethylarginine: Arg339 and Arg371. Asymmetric dimethylarginine; alternate is present on residues Arg423 and Arg428. 2 positions are modified to omega-N-methylarginine; alternate: Arg423 and Arg428.

In terms of assembly, interacts with ER-alpha N-terminal activation domain. Interacts with RBPMS; the interaction allows cooperative assembly of stable cell-specific alternative splicing regulatory complexes.

The protein localises to the nucleus. It is found in the cytoplasm. Its function is as follows. RNA-binding protein that regulates alternative splicing events by binding to 5'-UGCAUGU-3' elements. Prevents binding of U2AF2 to the 3'-splice site. Regulates alternative splicing of tissue-specific exons and of differentially spliced exons during erythropoiesis. Seems to act as a coregulatory factor of ER-alpha. Together with RNA binding proteins RBPMS and MBNL1/2, activates vascular smooth muscle cells alternative splicing events. The sequence is that of RNA binding protein fox-1 homolog 2 (Rbfox2) from Rattus norvegicus (Rat).